Reading from the N-terminus, the 575-residue chain is Proline--tRNA ligase (575 aa).

Belongs to the class-II aminoacyl-tRNA synthetase family. ProS type 1 subfamily. As to quaternary structure, homodimer.

Its subcellular location is the cytoplasm. It carries out the reaction tRNA(Pro) + L-proline + ATP = L-prolyl-tRNA(Pro) + AMP + diphosphate. In terms of biological role, catalyzes the attachment of proline to tRNA(Pro) in a two-step reaction: proline is first activated by ATP to form Pro-AMP and then transferred to the acceptor end of tRNA(Pro). As ProRS can inadvertently accommodate and process non-cognate amino acids such as alanine and cysteine, to avoid such errors it has two additional distinct editing activities against alanine. One activity is designated as 'pretransfer' editing and involves the tRNA(Pro)-independent hydrolysis of activated Ala-AMP. The other activity is designated 'posttransfer' editing and involves deacylation of mischarged Ala-tRNA(Pro). The misacylated Cys-tRNA(Pro) is not edited by ProRS. This chain is Proline--tRNA ligase, found in Saccharophagus degradans (strain 2-40 / ATCC 43961 / DSM 17024).